A 170-amino-acid chain; its full sequence is Aspartate 1-decarboxylase (170 aa).

Catalysis depends on serine 25, which acts as the Schiff-base intermediate with substrate; via pyruvic acid. A Pyruvic acid (Ser) modification is found at serine 25. A substrate-binding site is contributed by threonine 57. Catalysis depends on tyrosine 58, which acts as the Proton donor. 73 to 75 (GAA) provides a ligand contact to substrate. The disordered stretch occupies residues 118–170 (GHDPAEALPDDPSSLRGDLAVPGNPVTAAARRGTPTHQAPVALPASRTVVAPR).

This sequence belongs to the PanD family. Heterooctamer of four alpha and four beta subunits. Pyruvate serves as cofactor. Is synthesized initially as an inactive proenzyme, which is activated by self-cleavage at a specific serine bond to produce a beta-subunit with a hydroxyl group at its C-terminus and an alpha-subunit with a pyruvoyl group at its N-terminus.

It is found in the cytoplasm. The catalysed reaction is L-aspartate + H(+) = beta-alanine + CO2. The protein operates within cofactor biosynthesis; (R)-pantothenate biosynthesis; beta-alanine from L-aspartate: step 1/1. Its function is as follows. Catalyzes the pyruvoyl-dependent decarboxylation of aspartate to produce beta-alanine. This chain is Aspartate 1-decarboxylase, found in Frankia alni (strain DSM 45986 / CECT 9034 / ACN14a).